The primary structure comprises 546 residues: Chaperonin GroEL 2 (546 aa).

ATP is bound by residues 30–33 (TLGP), Lys-51, 87–91 (DGTTT), Gly-415, 479–481 (NAA), and Asp-495. Residues 524 to 546 (APKDAPPAQPAGVPGAGGTGFDF) are disordered. Over residues 537 to 546 (PGAGGTGFDF) the composition is skewed to gly residues.

It belongs to the chaperonin (HSP60) family. In terms of assembly, forms a cylinder of 14 subunits composed of two heptameric rings stacked back-to-back. Interacts with the co-chaperonin GroES.

It localises to the cytoplasm. It catalyses the reaction ATP + H2O + a folded polypeptide = ADP + phosphate + an unfolded polypeptide.. Together with its co-chaperonin GroES, plays an essential role in assisting protein folding. The GroEL-GroES system forms a nano-cage that allows encapsulation of the non-native substrate proteins and provides a physical environment optimized to promote and accelerate protein folding. The sequence is that of Chaperonin GroEL 2 from Burkholderia thailandensis (strain ATCC 700388 / DSM 13276 / CCUG 48851 / CIP 106301 / E264).